The sequence spans 469 residues: Probable ribonuclease FAU-1 (469 aa).

Belongs to the FAU-1 family.

Its function is as follows. Probable RNase involved in rRNA stability through maturation and/or degradation of precursor rRNAs. Binds to RNA in loop regions with AU-rich sequences. The sequence is that of Probable ribonuclease FAU-1 from Ignicoccus hospitalis (strain KIN4/I / DSM 18386 / JCM 14125).